A 391-amino-acid chain; its full sequence is Ectodysplasin-A (391 aa).

Residues 1–41 lie on the Cytoplasmic side of the membrane; the sequence is MGYPEVERRELLPAAAPRERGSQGCGCGGAPARAGEGNSCL. The chain crosses the membrane as a helical; Signal-anchor for type II membrane protein span at residues 42–62; that stretch reads LFLGFFGLSLALHLLTLCCYL. At 63-391 the chain is on the extracellular side; it reads ELRSELRRER…AIRLGEAPAS (329 aa). Disordered stretches follow at residues 73-127 and 146-245; these read GAES…HSDS and YSEE…GTRE. Residues 86–101 are compositionally biased toward low complexity; the sequence is TSGTLSSLGGLDPDSP. The span at 102-113 shows a compositional bias: polar residues; the sequence is ITSHLGQPSPKQ. Positions 180-229 constitute a Collagen-like domain; that stretch reads GPPGPNGPPGPPGPPGPQGPPGIPGIPGIPGTTVMGPPGPPGPPGPQGPP. Composition is skewed to pro residues over residues 181–203 and 216–228; these read PPGP…PGIP and PPGP…PQGP. The THD domain occupies 249 to 385; sequence AVVHLQGQGS…HTTFFGAIRL (137 aa). Residue Asn-313 is glycosylated (N-linked (GlcNAc...) asparagine). An intrachain disulfide couples Cys-332 to Cys-346. N-linked (GlcNAc...) asparagine glycosylation is present at Asn-372.

This sequence belongs to the tumor necrosis factor family. In terms of assembly, homotrimer. The homotrimers may then dimerize and form higher-order oligomers. N-glycosylated. Post-translationally, processing by furin produces a secreted form. In terms of tissue distribution, not abundant; expressed in specific cell types of ectodermal (but not mesodermal) origin of keratinocytes, hair follicles, sweat glands. Also in adult heart, liver, muscle, pancreas, prostate, fetal liver, uterus, small intestine and umbilical cord.

It localises to the cell membrane. The protein resides in the secreted. Functionally, cytokine which is involved in epithelial-mesenchymal signaling during morphogenesis of ectodermal organs. Functions as a ligand activating the DEATH-domain containing receptors EDAR and EDA2R. May also play a role in cell adhesion. Binds only to the receptor EDAR, while isoform 3 binds exclusively to the receptor EDA2R. Its function is as follows. Binds only to the receptor EDA2R. In Homo sapiens (Human), this protein is Ectodysplasin-A (EDA).